The chain runs to 239 residues: Ribonuclease HII (239 aa).

An RNase H type-2 domain is found at 30 to 221 (GPVAGVDEVG…VRRLVTAGTP (192 aa)). A divalent metal cation is bound by residues Asp-36, Glu-37, and Asp-130.

This sequence belongs to the RNase HII family. Mn(2+) serves as cofactor. It depends on Mg(2+) as a cofactor.

The protein localises to the cytoplasm. It carries out the reaction Endonucleolytic cleavage to 5'-phosphomonoester.. Its function is as follows. Endonuclease that specifically degrades the RNA of RNA-DNA hybrids. The protein is Ribonuclease HII of Mycobacterium sp. (strain KMS).